Reading from the N-terminus, the 435-residue chain is Cell adhesion molecule 2 (435 aa).

A signal peptide spans 1–24 (MIWKRSAVLRFYSVCGLLLQGSQG). Over 25–367 (QFPLTQNVTV…SLAGQNGPDH (343 aa)) the chain is Extracellular. Residues 27–119 (PLTQNVTVVE…PVKTSKAYLT (93 aa)) enclose the Ig-like V-type domain. N-linked (GlcNAc...) asparagine glycosylation is found at N31 and N51. 3 disulfide bridges follow: C44–C104, C146–C203, and C248–C296. Ig-like C2-type domains lie at 127 to 219 (PQIS…VAMQ) and 227 to 312 (PSVK…YVLI). N-linked (GlcNAc...) asparagine glycosylation is present at N291. The span at 337 to 351 (SVTITTSPSTSASSS) shows a compositional bias: low complexity. Residues 337–360 (SVTITTSPSTSASSSSRRDPNSLA) are disordered. Residues 368-388 (ALIGGIVAVVVFVTLCSIFLL) form a helical membrane-spanning segment. Residues 389 to 435 (GRYLARHKGTYLTNEAKGAEDAPDADTAIINAEGSQVNAEEKKEYFI) lie on the Cytoplasmic side of the membrane. Phosphoserine is present on S423.

This sequence belongs to the nectin family. In terms of processing, glycosylation at Asn-51 reduces adhesive binding.

The protein localises to the cell membrane. Its subcellular location is the synapse. It is found in the cell projection. The protein resides in the axon. Functionally, adhesion molecule that engages in homo- and heterophilic interactions with the other nectin-like family members, leading to cell aggregation. Important for synapse organization, providing regulated trans-synaptic adhesion. Preferentially binds to oligodendrocytes. In Mus musculus (Mouse), this protein is Cell adhesion molecule 2 (Cadm2).